A 313-amino-acid polypeptide reads, in one-letter code: Oxaloacetate tautomerase Fahd2a, mitochondrial (313 aa).

Residues 1 to 84 constitute a mitochondrion transit peptide; that stretch reads MLGSGRRRLL…TALSVARRAL (84 aa). The Mg(2+) site is built by Glu159, Glu161, and Asp190. Lys202 is modified (N6-acetyllysine; alternate). Lys202 is subject to N6-succinyllysine; alternate. An N6-acetyllysine modification is found at Lys233.

This sequence belongs to the FAH family. The cofactor is Mg(2+). Mn(2+) is required as a cofactor.

It is found in the mitochondrion. The catalysed reaction is oxaloacetate = enol-oxaloacetate. Tautomerase that converts enol-oxaloacetate, a strong inhibitor of succinate dehydrogenase, to the physiological keto form of oxaloacetate. It is thereby required to maximize aerobic respiration efficiency by preventing succinate dehydrogenase inhibition. The chain is Oxaloacetate tautomerase Fahd2a, mitochondrial from Rattus norvegicus (Rat).